The primary structure comprises 367 residues: UDP-N-acetylglucosamine--N-acetylmuramyl-(pentapeptide) pyrophosphoryl-undecaprenol N-acetylglucosamine transferase (367 aa).

Residues 18–20, N130, R170, S196, I252, 271–276, and Q297 each bind UDP-N-acetyl-alpha-D-glucosamine; these read TGG and ALTVSE.

Belongs to the glycosyltransferase 28 family. MurG subfamily.

It localises to the cell inner membrane. The catalysed reaction is di-trans,octa-cis-undecaprenyl diphospho-N-acetyl-alpha-D-muramoyl-L-alanyl-D-glutamyl-meso-2,6-diaminopimeloyl-D-alanyl-D-alanine + UDP-N-acetyl-alpha-D-glucosamine = di-trans,octa-cis-undecaprenyl diphospho-[N-acetyl-alpha-D-glucosaminyl-(1-&gt;4)]-N-acetyl-alpha-D-muramoyl-L-alanyl-D-glutamyl-meso-2,6-diaminopimeloyl-D-alanyl-D-alanine + UDP + H(+). It participates in cell wall biogenesis; peptidoglycan biosynthesis. Functionally, cell wall formation. Catalyzes the transfer of a GlcNAc subunit on undecaprenyl-pyrophosphoryl-MurNAc-pentapeptide (lipid intermediate I) to form undecaprenyl-pyrophosphoryl-MurNAc-(pentapeptide)GlcNAc (lipid intermediate II). This chain is UDP-N-acetylglucosamine--N-acetylmuramyl-(pentapeptide) pyrophosphoryl-undecaprenol N-acetylglucosamine transferase, found in Shewanella frigidimarina (strain NCIMB 400).